The sequence spans 211 residues: Metalloproteinase inhibitor 3 (211 aa).

An N-terminal signal peptide occupies residues Met1 to Ala23. A Zn(2+)-binding site is contributed by Cys24. Involved in metalloproteinase-binding stretches follow at residues Cys24–Ser27 and Glu88–Ser89. 6 cysteine pairs are disulfide-bonded: Cys24-Cys91, Cys26-Cys118, Cys36-Cys143, Cys145-Cys192, Cys150-Cys155, and Cys163-Cys184. In terms of domain architecture, NTR spans Cys24 to Cys143. The mediates interaction with EFEMP1 stretch occupies residues Thr105–Lys188.

Belongs to the protease inhibitor I35 (TIMP) family. Interacts with EFEMP1. Interacts with KDR. In terms of tissue distribution, highest levels are found in kidney, lung and brain followed by ovary and uterus. Low levels are found in bone.

The protein resides in the secreted. The protein localises to the extracellular space. Its subcellular location is the extracellular matrix. Mediates a variety of processes including matrix regulation and turnover, inflammation, and angiogenesis, through reversible inhibition of zinc protease superfamily enzymes, primarily matrix metalloproteinases (MMPs). Regulates extracellular matrix (ECM) remodeling through inhibition of matrix metalloproteinases (MMP) including MMP-1, MMP-2, MMP-3, MMP-7, MMP-9, MMP-13, MMP-14 and MMP-15. Additionally, modulates the processing of amyloid precursor protein (APP) and apolipoprotein E receptor ApoER2 by inhibiting two alpha-secretases ADAM10 and ADAM17. Functions as a tumor suppressor and a potent inhibitor of angiogenesis. Exerts its anti-angiogenic effect by directly interacting with vascular endothelial growth factor (VEGF) receptor-2/KDR, preventing its binding to the VEGFA ligand. Selectively induces apoptosis in angiogenic endothelial cells through a caspase-independent cell death pathway. Mechanistically, inhibits matrix-induced focal adhesion kinase PTK2 tyrosine phosphorylation and association with paxillin/PXN and disrupts the incorporation of ITGB3, PTK2 and PXN into focal adhesion contacts on the matrix. This chain is Metalloproteinase inhibitor 3 (Timp3), found in Mus musculus (Mouse).